The following is a 684-amino-acid chain: Glycine--tRNA ligase beta subunit (684 aa).

Belongs to the class-II aminoacyl-tRNA synthetase family. As to quaternary structure, tetramer of two alpha and two beta subunits.

Its subcellular location is the cytoplasm. The catalysed reaction is tRNA(Gly) + glycine + ATP = glycyl-tRNA(Gly) + AMP + diphosphate. This Stutzerimonas stutzeri (strain A1501) (Pseudomonas stutzeri) protein is Glycine--tRNA ligase beta subunit.